Consider the following 372-residue polypeptide: Alpha-parvin (372 aa).

A compositionally biased stretch (low complexity) spans 1–11; sequence MATSPQKSPSV. The interval 1–44 is disordered; the sequence is MATSPQKSPSVPKSPTPKSPPSRKKDDSFLGKLGGTLARRKKAK. Position 2 is an N-acetylalanine (Ala-2). Ser-8, Ser-14, and Ser-19 each carry phosphoserine. An interaction with ARHGAP31 region spans residues 21–25; it reads PSRKK. 2 positions are modified to phosphoserine: Ser-28 and Ser-62. 2 Calponin-homology (CH) domains span residues 95–202 and 262–369; these read QELM…QYFR and NVVK…TKYR. The tract at residues 223 to 372 is required for interaction with TESK1 and ILK; sequence GILQSRQIQE…NLFTKYRNVE (150 aa).

This sequence belongs to the parvin family. As to quaternary structure, component of the heterotrimeric IPP (ILK-PINCH-PARVIN) complex composed of ILK, LIMS1/PINCH and PARVA; the complex binds to F-actin via the C-terminal tail of LIMS1 and the N-terminal region of PARVA, promoting F-actin filament bundling. Interacts with TGFB1I1. Interacts with ARHGAP31. Interacts with the actin cytoskeleton. Interacts (via C-terminus) with TESK1 (via C-terminus); the interaction inhibits TESK1 kinase activity. Interacts with PXN/PAXILLIN (via LD motif 4). In terms of tissue distribution, widely expressed.

It localises to the cell junction. The protein localises to the focal adhesion. It is found in the cell membrane. The protein resides in the cytoplasm. Its subcellular location is the cytoskeleton. It localises to the myofibril. The protein localises to the sarcomere. It is found in the z line. Functionally, plays a role in sarcomere organization and in smooth muscle cell contraction. Required for normal development of the embryonic cardiovascular system, and for normal septation of the heart outflow tract. Plays a role in sprouting angiogenesis and is required for normal adhesion of vascular smooth muscle cells to endothelial cells during blood vessel development. Plays a role in the reorganization of the actin cytoskeleton, formation of lamellipodia and ciliogenesis. Plays a role in the establishment of cell polarity, cell adhesion, cell spreading, and directed cell migration. Within the IPP (ILK-PINCH-PARVIN) complex, binds to F-actin, promoting F-actin bundling, a process required to generate force for actin cytoskeleton reorganization and subsequent dynamic cell adhesion events such as cell spreading and migration. In Rattus norvegicus (Rat), this protein is Alpha-parvin (Parva).